Reading from the N-terminus, the 1845-residue chain is Proteasome activator complex subunit 4 (1845 aa).

Over residues 1-13 (MEPAERAGGRDPL) the composition is skewed to basic and acidic residues. The disordered stretch occupies residues 1-26 (MEPAERAGGRDPLEPGGRPGPDPQGF). HEAT repeat units lie at residues 475–519 (PEGP…LVDC) and 1000–1039 (NFCCRDIIPLVLGFLRPDRQDVTQQQFKGALYCLLGNHSG). Serine 1123 is modified (phosphoserine). HEAT repeat units lie at residues 1181–1219 (RVLPLRAIRFFVENLNHDAIVVRKMAISAVAGILKQLKR) and 1356–1394 (DAFLPVLKPHLERLVADSHESTQRCVAEIIAGLIRGSKH). Serine 1616 bears the Phosphoserine mark. HEAT repeat units lie at residues 1638–1676 (PHQVPLVLQVLNQTARSSSWHARYTVLTYLQTMVFYNLF) and 1682–1720 (EDAVKDIRWLVISLLEDEQLEVREMAATTLSGLLQCNFL). The tract at residues 1652-1740 (ARSSSWHARY…EQLCKTKLPK (89 aa)) is bromodomain-like (BRDL).

The protein belongs to the BLM10 family. In terms of assembly, homodimer. Component of the spermatoproteasome, a form of the proteasome specifically found in testis. Interacts with the 20S and 26S proteasomes. Phosphorylated.

It is found in the cytoplasm. The protein localises to the cytosol. The protein resides in the nucleus. It localises to the nucleus speckle. Its function is as follows. Associated component of the proteasome that specifically recognizes acetylated histones and promotes ATP- and ubiquitin-independent degradation of core histones during spermatogenesis and DNA damage response. Recognizes and binds acetylated histones via its bromodomain-like (BRDL) region and activates the proteasome by opening the gated channel for substrate entry. Binds to the core proteasome via its C-terminus, which occupies the same binding sites as the proteasomal ATPases, opening the closed structure of the proteasome via an active gating mechanism. Component of the spermatoproteasome, a form of the proteasome specifically found in testis: binds to acetylated histones and promotes degradation of histones, thereby participating actively to the exchange of histones during spermatogenesis. Also involved in DNA damage response in somatic cells, by promoting degradation of histones following DNA double-strand breaks. In Bos taurus (Bovine), this protein is Proteasome activator complex subunit 4 (PSME4).